Consider the following 359-residue polypeptide: Molybdenum import ATP-binding protein ModC (359 aa).

Residues 1-236 enclose the ABC transporter domain; that stretch reads MNTEIKARFR…IDLPAAFADD (236 aa). ATP is bound at residue 34–41; sequence GHSGSGKT. The Mop domain occupies 294 to 359; that stretch reads QSSILNCVSA…AQIKAVALLA (66 aa).

This sequence belongs to the ABC transporter superfamily. Molybdate importer (TC 3.A.1.8) family. In terms of assembly, the complex is composed of two ATP-binding proteins (ModC), two transmembrane proteins (ModB) and a solute-binding protein (ModA).

Its subcellular location is the cell inner membrane. It catalyses the reaction molybdate(out) + ATP + H2O = molybdate(in) + ADP + phosphate + H(+). In terms of biological role, part of the ABC transporter complex ModABC involved in molybdenum import. Responsible for energy coupling to the transport system. This is Molybdenum import ATP-binding protein ModC from Dechloromonas aromatica (strain RCB).